The primary structure comprises 300 residues: Bifunctional protein FolD 2 (300 aa).

Residues 166–168 (GRS), Ser-191, and Ile-232 each bind NADP(+).

This sequence belongs to the tetrahydrofolate dehydrogenase/cyclohydrolase family. In terms of assembly, homodimer.

It catalyses the reaction (6R)-5,10-methylene-5,6,7,8-tetrahydrofolate + NADP(+) = (6R)-5,10-methenyltetrahydrofolate + NADPH. It carries out the reaction (6R)-5,10-methenyltetrahydrofolate + H2O = (6R)-10-formyltetrahydrofolate + H(+). The protein operates within one-carbon metabolism; tetrahydrofolate interconversion. In terms of biological role, catalyzes the oxidation of 5,10-methylenetetrahydrofolate to 5,10-methenyltetrahydrofolate and then the hydrolysis of 5,10-methenyltetrahydrofolate to 10-formyltetrahydrofolate. The sequence is that of Bifunctional protein FolD 2 from Roseobacter denitrificans (strain ATCC 33942 / OCh 114) (Erythrobacter sp. (strain OCh 114)).